We begin with the raw amino-acid sequence, 192 residues long: MNTQDVIDIFKQADAILEGHFILTSGRHSATYMQKAKVFMHAHLTEKLCRGLAEKIKKSVEEKIDYVVGPAIGGLIPSYETSRHLGIPSLWVERVNGRFELRRFEIKKGARVVIVEDIVTTGLSIRETVEALVTAGANVLASACILDRSGGKVDVGVPLISLAEYEIASYASDAVPAELAELPAIKPGSRNI.

Residue 116-124 participates in 5-phospho-alpha-D-ribose 1-diphosphate binding; it reads EDIVTTGLS. Residues Thr-120 and Arg-148 each coordinate orotate.

The protein belongs to the purine/pyrimidine phosphoribosyltransferase family. PyrE subfamily. Homodimer. The cofactor is Mg(2+).

The catalysed reaction is orotidine 5'-phosphate + diphosphate = orotate + 5-phospho-alpha-D-ribose 1-diphosphate. It functions in the pathway pyrimidine metabolism; UMP biosynthesis via de novo pathway; UMP from orotate: step 1/2. In terms of biological role, catalyzes the transfer of a ribosyl phosphate group from 5-phosphoribose 1-diphosphate to orotate, leading to the formation of orotidine monophosphate (OMP). The sequence is that of Orotate phosphoribosyltransferase from Bartonella henselae (strain ATCC 49882 / DSM 28221 / CCUG 30454 / Houston 1) (Rochalimaea henselae).